Here is a 132-residue protein sequence, read N- to C-terminus: Interferon-induced transmembrane protein 5 (132 aa).

The span at 1–11 shows a compositional bias: basic and acidic residues; the sequence is MDTAYPREDTR. The disordered stretch occupies residues 1-21; sequence MDTAYPREDTRAPTPSKAGAH. Topologically, residues 1-36 are extracellular; the sequence is MDTAYPREDTRAPTPSKAGAHTALTLGAPHPPPRDH. The helical transmembrane segment at 37–57 threads the bilayer; it reads LIWSVFSTLYLNLCCLGFLAL. 3 S-palmitoyl cysteine lipidation sites follow: Cys-50, Cys-51, and Cys-84. The Cytoplasmic segment spans residues 58–86; the sequence is AYSIKARDQKVVGDLEAARRFGSKAKCYN. A helical membrane pass occupies residues 87–107; the sequence is ILAAMWTLVPPLLLLGLVVTG. Residues 108-132 lie on the Extracellular side of the membrane; sequence ALHLARLAKDSAAFFSTKFDDADYD.

The protein belongs to the CD225/Dispanin family. As to quaternary structure, interacts with FKBP11. Post-translationally, palmitoylated. Detected in osteoblasts and fibroblasts (at protein level). Detected in bone.

The protein resides in the cell membrane. Its function is as follows. Required for normal bone mineralization. The polypeptide is Interferon-induced transmembrane protein 5 (IFITM5) (Homo sapiens (Human)).